Consider the following 190-residue polypeptide: Xanthine phosphoribosyltransferase (190 aa).

The xanthine site is built by leucine 20 and asparagine 27. A 5-phospho-alpha-D-ribose 1-diphosphate-binding site is contributed by 128–132 (ANGNA). Lysine 156 lines the xanthine pocket.

The protein belongs to the purine/pyrimidine phosphoribosyltransferase family. Xpt subfamily. As to quaternary structure, homodimer.

The protein localises to the cytoplasm. It carries out the reaction XMP + diphosphate = xanthine + 5-phospho-alpha-D-ribose 1-diphosphate. Its pathway is purine metabolism; XMP biosynthesis via salvage pathway; XMP from xanthine: step 1/1. Its function is as follows. Converts the preformed base xanthine, a product of nucleic acid breakdown, to xanthosine 5'-monophosphate (XMP), so it can be reused for RNA or DNA synthesis. In Clostridium novyi (strain NT), this protein is Xanthine phosphoribosyltransferase.